Here is a 119-residue protein sequence, read N- to C-terminus: Large ribosomal subunit protein bL20 (119 aa).

It belongs to the bacterial ribosomal protein bL20 family.

Binds directly to 23S ribosomal RNA and is necessary for the in vitro assembly process of the 50S ribosomal subunit. It is not involved in the protein synthesizing functions of that subunit. In Streptococcus uberis (strain ATCC BAA-854 / 0140J), this protein is Large ribosomal subunit protein bL20.